Consider the following 160-residue polypeptide: Putative 4-hydroxy-4-methyl-2-oxoglutarate aldolase (160 aa).

Substrate-binding positions include G75–L78 and R97. D98 is a binding site for a divalent metal cation.

This sequence belongs to the class II aldolase/RraA-like family. As to quaternary structure, homotrimer. A divalent metal cation is required as a cofactor.

The catalysed reaction is 4-hydroxy-4-methyl-2-oxoglutarate = 2 pyruvate. It catalyses the reaction oxaloacetate + H(+) = pyruvate + CO2. Its function is as follows. Catalyzes the aldol cleavage of 4-hydroxy-4-methyl-2-oxoglutarate (HMG) into 2 molecules of pyruvate. Also contains a secondary oxaloacetate (OAA) decarboxylase activity due to the common pyruvate enolate transition state formed following C-C bond cleavage in the retro-aldol and decarboxylation reactions. The protein is Putative 4-hydroxy-4-methyl-2-oxoglutarate aldolase of Vibrio parahaemolyticus serotype O3:K6 (strain RIMD 2210633).